The sequence spans 485 residues: Adenosylhomocysteinase (485 aa).

Substrate-binding residues include threonine 64, aspartate 139, and glutamate 205. Threonine 206–threonine 208 is an NAD(+) binding site. Lysine 235 and aspartate 239 together coordinate substrate. Residues asparagine 240, glycine 269–glycine 274, glutamate 292, asparagine 327, isoleucine 348–histidine 350, and asparagine 397 contribute to the NAD(+) site.

This sequence belongs to the adenosylhomocysteinase family. The cofactor is NAD(+).

The catalysed reaction is S-adenosyl-L-homocysteine + H2O = L-homocysteine + adenosine. It functions in the pathway amino-acid biosynthesis; L-homocysteine biosynthesis; L-homocysteine from S-adenosyl-L-homocysteine: step 1/1. Its function is as follows. Adenosylhomocysteine is a competitive inhibitor of S-adenosyl-L-methionine-dependent methyl transferase reactions; therefore adenosylhomocysteinase may play a key role in the control of methylations via regulation of the intracellular concentration of adenosylhomocysteine. This Phalaenopsis sp. (Moth orchid) protein is Adenosylhomocysteinase (SAHH).